We begin with the raw amino-acid sequence, 318 residues long: Methionyl-tRNA formyltransferase (318 aa).

113 to 116 lines the (6S)-5,6,7,8-tetrahydrofolate pocket; that stretch reads SLLP.

Belongs to the Fmt family.

The catalysed reaction is L-methionyl-tRNA(fMet) + (6R)-10-formyltetrahydrofolate = N-formyl-L-methionyl-tRNA(fMet) + (6S)-5,6,7,8-tetrahydrofolate + H(+). Attaches a formyl group to the free amino group of methionyl-tRNA(fMet). The formyl group appears to play a dual role in the initiator identity of N-formylmethionyl-tRNA by promoting its recognition by IF2 and preventing the misappropriation of this tRNA by the elongation apparatus. This chain is Methionyl-tRNA formyltransferase, found in Hahella chejuensis (strain KCTC 2396).